The following is a 71-amino-acid chain: Large ribosomal subunit protein bL31 (71 aa).

Zn(2+) contacts are provided by Cys16, Cys18, Cys37, and Cys40.

This sequence belongs to the bacterial ribosomal protein bL31 family. Type A subfamily. Part of the 50S ribosomal subunit. The cofactor is Zn(2+).

Its function is as follows. Binds the 23S rRNA. This Wigglesworthia glossinidia brevipalpis protein is Large ribosomal subunit protein bL31.